Here is a 237-residue protein sequence, read N- to C-terminus: Dynein axonemal assembly factor 19 (237 aa).

Positions 8–33 (NFKALEKELQAALAADEKYKRENAAK) form a coiled coil.

It belongs to the DNAAF19/PR46b family. In terms of assembly, homodimer.

The protein resides in the cytoplasm. It localises to the cell projection. The protein localises to the cilium. It is found in the flagellum. Functionally, dynein-attachment factor required for cilia motility. This chain is Dynein axonemal assembly factor 19 (Dnaaf19), found in Mus musculus (Mouse).